The chain runs to 79 residues: Hematopoietic cell signal transducer (79 aa).

The first 17 residues, 1–17 (MDPPGYLLFLLLLPVAA), serve as a signal peptide directing secretion. The Extracellular portion of the chain corresponds to 18–35 (SQTSAGSCSGCGTLSLPL). Residues 36 to 56 (LAGLVAADAVMSLLIVGVVFV) traverse the membrane as a helical segment. Over 57–79 (CMRPHGRPAQEDGRVYINMPGRG) the chain is Cytoplasmic. Y72 carries the post-translational modification Phosphotyrosine. Residues 72–74 (YIN) are GRB2 binding site. The PIK3R1 binding site stretch occupies residues 72-75 (YINM).

Belongs to the DAP10 family. In terms of assembly, homodimer; Disulfide-linked. Interacts with KLRK1 to form a stable complex, which results in surface expression of both proteins, whereas alone, it is minimally expressed. Interacts with PIK3R1 and GRB2. Interacts with CLEC5A. Forms an CLEC5A/TYROBP/HCST trimolecular complex depending almost solely on TYROBP. Heterohexamer composed of four subunits of HCST/DAP10 and two subunits of KLRK1. Interacts (via transmembrane domain) with KLRK1 isoform 1 (via transmembrane domain); the interaction is required for KLRK1 cell surface expression on naive NK cells and activated CD8(+) T-cells, but is dispensable on activated TYROBP-expressing NK cells. Interacts (via transmembrane domain) with KLRK1 isoform 2 (via transmembrane domain); the interaction is required for KLRK1 NK cell surface expression and induces NK cell-mediated cytotoxicity. Interacts with CD300H. In terms of processing, phosphorylated; PIK3R1 and GRB2 associate specifically with tyrosine-phosphorylated HCST. Post-translationally, O-glycosylated.

The protein localises to the membrane. Its function is as follows. Transmembrane adapter protein which associates with KLRK1 to form an activation receptor KLRK1-HCST in lymphoid and myeloid cells; this receptor plays a major role in triggering cytotoxicity against target cells expressing cell surface ligands such as MHC class I chain-related MICA and MICB, and UL16-binding proteins (ULBPs); these ligands are up-regulated by stress conditions and pathological state such as viral infection and tumor transformation. Functions as a docking site for PI3-kinase PIK3R1 and GRB2. Interaction of ULBPs with KLRK1-HCST triggers calcium mobilization and activation of the PIK3R1, MAP2K/ERK, and JAK2/STAT5 signaling pathways. Both PIK3R1 and GRB2 are required for full KLRK1-HCST-mediated activation and ultimate killing of target cells. In NK cells, KLRK1-HCST signaling directly induces cytotoxicity and enhances cytokine production initiated via DAP12/TYROBP-associated receptors. In T-cells, it provides primarily costimulation for TCR-induced signals. KLRK1-HCST receptor plays a role in immune surveillance against tumors and is required for cytolysis of tumors cells; indeed, melanoma cells that do not express KLRK1 ligands escape from immune surveillance mediated by NK cells. This chain is Hematopoietic cell signal transducer (Hcst), found in Mus musculus (Mouse).